A 489-amino-acid chain; its full sequence is Cysteine--tRNA ligase (489 aa).

Cysteine 27 contributes to the Zn(2+) binding site. The short motif at 29 to 39 (VTVYDLCHLGH) is the 'HIGH' region element. 3 residues coordinate Zn(2+): cysteine 211, histidine 236, and glutamate 240. A 'KMSKS' region motif is present at residues 268–272 (KMSKS). Lysine 271 is an ATP binding site.

It belongs to the class-I aminoacyl-tRNA synthetase family. In terms of assembly, monomer. The cofactor is Zn(2+).

The protein localises to the cytoplasm. The catalysed reaction is tRNA(Cys) + L-cysteine + ATP = L-cysteinyl-tRNA(Cys) + AMP + diphosphate. The protein is Cysteine--tRNA ligase of Prochlorococcus marinus (strain AS9601).